A 311-amino-acid polypeptide reads, in one-letter code: MPDAIEFEHEGRRNPNSAEAESAYSSIIAALDLQESDYAVISGHSRIVGAAALVYPDADAETLLAASLWTACLIVNDDRWDYVQEDGGRLAPGEWFDGVTEVVDTWRTAGPRLPDPFFELVRTTMSRLDAALGAEAADEIGHEIKRAITAMKWEGVWNEYTKKTSLATYLSFRRGYCTMDVQVVLDKWINGGRSFAALRDDPVRRAIDDVVVRFGCLSNDYYSWGREKKAVDKSNAVRILMDHAGYDESTALAHVRDDCVQAITDLDCIEESIKRSGHLGSHAQELLDYLACHRPLIYAAATWPTETNRYR.

A DDXXD motif motif is present at residues 77–81 (DDRWD).

This sequence belongs to the terpene synthase family. In terms of assembly, homodimer. The cofactor is Mg(2+).

The enzyme catalyses terpentedienyl diphosphate = terpentetriene + diphosphate. Its pathway is antibiotic biosynthesis. Involved in the production of the isoprenoid antibiotic terpentecin. Converts terpentedienol diphosphate (TDP) into terpentetriene (TTE). Can also accept geranylgeranyl diphosphate (GGDP) and farnesyl diphosphate (FDP) as substrates. The polypeptide is Terpentetriene synthase (cyc2) (Kitasatospora griseola (Streptomyces griseolosporeus)).